Consider the following 447-residue polypeptide: UDP-N-acetylmuramate--L-alanine ligase (447 aa).

107–113 (GTHGKTT) serves as a coordination point for ATP.

The protein belongs to the MurCDEF family.

The protein resides in the cytoplasm. The catalysed reaction is UDP-N-acetyl-alpha-D-muramate + L-alanine + ATP = UDP-N-acetyl-alpha-D-muramoyl-L-alanine + ADP + phosphate + H(+). It participates in cell wall biogenesis; peptidoglycan biosynthesis. Its function is as follows. Cell wall formation. The chain is UDP-N-acetylmuramate--L-alanine ligase from Rubrobacter xylanophilus (strain DSM 9941 / JCM 11954 / NBRC 16129 / PRD-1).